A 335-amino-acid polypeptide reads, in one-letter code: Calcium/calmodulin-dependent protein kinase type I (335 aa).

Residues 31-291 form the Protein kinase domain; it reads YRVGRVLGGG…AADALKHPFL (261 aa). 37–45 serves as a coordination point for ATP; it reads LGGGTYATV. Aspartate 154 serves as the catalytic Proton acceptor. Threonine 192 is subject to Phosphothreonine; by autocatalysis. Residues 310–334 form a calmodulin-binding region; that stretch reads NARKTFRTAYNAVRAFNTWKKLENK.

It belongs to the protein kinase superfamily. CAMK Ser/Thr protein kinase family. CaMK subfamily.

It is found in the cytoplasm. The enzyme catalyses L-seryl-[protein] + ATP = O-phospho-L-seryl-[protein] + ADP + H(+). The catalysed reaction is L-threonyl-[protein] + ATP = O-phospho-L-threonyl-[protein] + ADP + H(+). In terms of biological role, important in cell cycle regulation. This is Calcium/calmodulin-dependent protein kinase type I (cmk1) from Schizosaccharomyces pombe (strain 972 / ATCC 24843) (Fission yeast).